Consider the following 479-residue polypeptide: Ubiquinone biosynthesis monooxygenase COQ6, mitochondrial (479 aa).

Residues 1–17 constitute a mitochondrion transit peptide; it reads MFFSKVMLTRRILVRGL.

It belongs to the UbiH/COQ6 family. In terms of assembly, component of a multi-subunit COQ enzyme complex, composed of at least COQ3, COQ4, COQ5, COQ6, COQ7 and COQ9. FAD serves as cofactor.

The protein resides in the mitochondrion inner membrane. It carries out the reaction 4-hydroxy-3-(all-trans-hexaprenyl)benzoate + 2 reduced [2Fe-2S]-[ferredoxin] + O2 + 2 H(+) = 3,4-dihydroxy-5-(all-trans-hexaprenyl)benzoate + 2 oxidized [2Fe-2S]-[ferredoxin] + H2O. The enzyme catalyses 2-methoxy-6-(all-trans-hexaprenyl)phenol + 2 reduced [2Fe-2S]-[ferredoxin] + O2 + 2 H(+) = 2-methoxy-6-(all-trans-hexaprenyl)benzene-1,4-diol + 2 oxidized [2Fe-2S]-[ferredoxin] + H2O. The catalysed reaction is 4-amino-3-(all-trans-hexaprenyl)benzoate + 2 reduced [2Fe-2S]-[ferredoxin] + O2 + 2 H(+) = 4-amino-5-hydroxy-3-(all-trans-hexaprenyl)benzoate + 2 oxidized [2Fe-2S]-[ferredoxin] + H2O. It catalyses the reaction 4-amino-5-hydroxy-3-(all-trans-hexaprenyl)benzoate + 4 reduced [2Fe-2S]-[ferredoxin] + O2 + 5 H(+) = 3,4-dihydroxy-5-(all-trans-hexaprenyl)benzoate + 4 oxidized [2Fe-2S]-[ferredoxin] + NH4(+) + H2O. Its pathway is cofactor biosynthesis; ubiquinone biosynthesis. Its function is as follows. FAD-dependent monooxygenase required for two non-consecutive steps during ubiquinone biosynthesis. Required for the C5-ring hydroxylation during ubiquinone biosynthesis by catalyzing the hydroxylation of 4-hydroxy-3-(all-trans-hexaprenyl)benzoic acid to 3,4-dihydroxy-5-(all-trans-hexaprenyl)benzoic acid. Also acts downstream of COQ4, for the C1-hydroxylation during ubiquinone biosynthesis by catalyzing the hydroxylation of 2-methoxy-6-(all-trans-hexaprenyl)phenol to 2-methoxy-6-(all-trans-hexaprenyl)benzene-1,4-diol. The electrons required for the hydroxylation reaction are funneled indirectly from NADPH via ferredoxin (YAH1) and ferredoxin reductase (ARH1) to COQ6. Can also convert 3-hexaprenyl-4-aminobenzoic acid (HAB), a COQ2-prenylated pABA, to DHHB in a two step process. HAB is first hydroxylated at C5 to yield 3-hexaprenyl-4-amino-5-hydroxybenzoic acid (HHAB) which is further deaminated at C4 by COQ6 to produce DHHB. The chain is Ubiquinone biosynthesis monooxygenase COQ6, mitochondrial from Saccharomyces cerevisiae (strain ATCC 204508 / S288c) (Baker's yeast).